Reading from the N-terminus, the 530-residue chain is uncharacterized protein (530 aa).

Positions 485-529 (SKEENREIKLSIRENKEKQRKKSVEKSVSKLQNQLNRLLNKNTIE) form a coiled coil.

This is an uncharacterized protein from Acanthamoeba polyphaga (Amoeba).